We begin with the raw amino-acid sequence, 152 residues long: Small ribosomal subunit protein uS13 (152 aa).

The protein belongs to the universal ribosomal protein uS13 family. In terms of assembly, component of the small ribosomal subunit.

The protein resides in the cytoplasm. Functionally, component of the small ribosomal subunit. The ribosome is a large ribonucleoprotein complex responsible for the synthesis of proteins in the cell. Plays an essential role in early embryonic development. The chain is Small ribosomal subunit protein uS13 (rps18) from Danio rerio (Zebrafish).